We begin with the raw amino-acid sequence, 1525 residues long: Dicer-like protein 1 (1525 aa).

The segment covering 37 to 52 (DLQEDDGSSDESDNDE) has biased composition (acidic residues). Residues 37-65 (DLQEDDGSSDESDNDEREDHSKTGVSQQR) are disordered. Residues 124–305 (LFERAKVQNT…DEATRLEKLL (182 aa)) enclose the Helicase ATP-binding domain. 137–144 (LDTGSGKT) provides a ligand contact to ATP. The DEAH box signature appears at 250–253 (DEAH). The Helicase C-terminal domain maps to 439 to 605 (QLSPKVQVLR…SFCRTLPEDR (167 aa)). In terms of domain architecture, Dicer dsRNA-binding fold spans 641–731 (ATAILARYAS…NSIYHRRLPA (91 aa)). In terms of domain architecture, PAZ spans 881–1009 (ESLTYVRDND…ICIEPLKVSA (129 aa)). RNase III domains lie at 1032-1192 (LISL…LSGG) and 1243-1394 (SRKI…VDSD). Mg(2+)-binding residues include E1283, D1380, and E1383. The DRBM domain maps to 1428-1496 (TFLHNRLTNE…SEKALAVLDE (69 aa)). Positions 1440, 1467, 1508, and 1510 each coordinate Zn(2+).

This sequence belongs to the helicase family. Dicer subfamily. Requires Mg(2+) as cofactor. Mn(2+) serves as cofactor.

Functionally, dicer-like endonuclease involved in cleaving double-stranded RNA in the RNA interference (RNAi) pathway. Produces 21 to 25 bp dsRNAs (siRNAs) which target the selective destruction of homologous RNAs leading to sequence-specific suppression of gene expression, called post-transcriptional gene silencing (PTGS). Part of a broad host defense response against viral infection and transposons. This is Dicer-like protein 1 (dcl1) from Aspergillus niger (strain ATCC MYA-4892 / CBS 513.88 / FGSC A1513).